Reading from the N-terminus, the 524-residue chain is Glutamyl-tRNA(Gln) amidotransferase subunit A, mitochondrial (524 aa).

Lys-76 functions as the Charge relay system in the catalytic mechanism. Residues 146 to 168 (KQYRGKGSPDSSQEDQEPQWLVA) form a disordered region. Ser-171 serves as the catalytic Charge relay system. Ser-195 functions as the Acyl-ester intermediate in the catalytic mechanism.

The protein belongs to the amidase family. GatA subfamily. As to quaternary structure, subunit of the heterotrimeric GatCAB amidotransferase (AdT) complex, composed of A (QRSL1), B (GATB) and C (GATC) subunits.

It localises to the mitochondrion. It carries out the reaction L-glutamyl-tRNA(Gln) + L-glutamine + ATP + H2O = L-glutaminyl-tRNA(Gln) + L-glutamate + ADP + phosphate + H(+). Functionally, allows the formation of correctly charged Gln-tRNA(Gln) through the transamidation of misacylated Glu-tRNA(Gln) in the mitochondria. The reaction takes place in the presence of glutamine and ATP through an activated gamma-phospho-Glu-tRNA(Gln). This chain is Glutamyl-tRNA(Gln) amidotransferase subunit A, mitochondrial, found in Ornithorhynchus anatinus (Duckbill platypus).